A 365-amino-acid polypeptide reads, in one-letter code: Regulatory protein RapG (365 aa).

TPR repeat units lie at residues 135-168 (GKLY…KKKL), 169-202 (ASAL…TSEL), 209-242 (AQLL…DEYA), 244-284 (SAYY…EPNR), and 326-359 (RELS…EELI).

It belongs to the Rap family.

The protein resides in the cytoplasm. Inhibited by PhrG. Its function is as follows. Involved in the regulation of expression of DegU-controlled genes. Inhibits the binding of DegU to the promoter regions of aprE, coding for an extracellular alkaline protease, and comK, a master regulator for development of genetic competence. RapG does not stimulate dephosphorylation of DegU-P. The polypeptide is Regulatory protein RapG (rapG) (Bacillus subtilis (strain 168)).